The sequence spans 243 residues: tRNA (guanine-N(1)-)-methyltransferase (243 aa).

S-adenosyl-L-methionine contacts are provided by residues Gly-108 and 127–132 (LGDFVL).

It belongs to the RNA methyltransferase TrmD family. Homodimer.

It is found in the cytoplasm. The catalysed reaction is guanosine(37) in tRNA + S-adenosyl-L-methionine = N(1)-methylguanosine(37) in tRNA + S-adenosyl-L-homocysteine + H(+). In terms of biological role, specifically methylates guanosine-37 in various tRNAs. This Streptococcus pyogenes serotype M2 (strain MGAS10270) protein is tRNA (guanine-N(1)-)-methyltransferase.